A 237-amino-acid chain; its full sequence is Phosphoribosylaminoimidazole-succinocarboxamide synthase (237 aa).

The protein belongs to the SAICAR synthetase family.

The enzyme catalyses 5-amino-1-(5-phospho-D-ribosyl)imidazole-4-carboxylate + L-aspartate + ATP = (2S)-2-[5-amino-1-(5-phospho-beta-D-ribosyl)imidazole-4-carboxamido]succinate + ADP + phosphate + 2 H(+). Its pathway is purine metabolism; IMP biosynthesis via de novo pathway; 5-amino-1-(5-phospho-D-ribosyl)imidazole-4-carboxamide from 5-amino-1-(5-phospho-D-ribosyl)imidazole-4-carboxylate: step 1/2. This is Phosphoribosylaminoimidazole-succinocarboxamide synthase from Hamiltonella defensa subsp. Acyrthosiphon pisum (strain 5AT).